We begin with the raw amino-acid sequence, 293 residues long: Protein PET54 (293 aa).

Its subcellular location is the mitochondrion inner membrane. Its function is as follows. Activator of specific mitochondrial mRNAs. PET54 is involved in the excision of intron aI5-beta from pre-mRNA for cytochrome c oxidase I (COX1) and plays a role in promoting the translation of COX3. This Saccharomyces cerevisiae (strain ATCC 204508 / S288c) (Baker's yeast) protein is Protein PET54 (PET54).